A 226-amino-acid polypeptide reads, in one-letter code: UPF0758 protein Spy49_0870 (226 aa).

Residues 103 to 225 (SVLTSVQVAE…YYSFREKSTL (123 aa)) enclose the MPN domain. Residues His-174, His-176, and Asp-187 each coordinate Zn(2+). Residues 174–187 (HNHPSGNIEPSSND) carry the JAMM motif motif.

The protein belongs to the UPF0758 family.

The polypeptide is UPF0758 protein Spy49_0870 (Streptococcus pyogenes serotype M49 (strain NZ131)).